Reading from the N-terminus, the 422-residue chain is Retinoic acid receptor RXR-beta-B (422 aa).

Positions 1–89 (MNSLPPSTSA…SGPMLSQKRM (89 aa)) are modulating. 2 NR C4-type zinc fingers span residues 90-110 (CAIC…CEGC) and 126-150 (CRDN…YQKC). The segment at residues 90 to 155 (CAICGDRSSG…RYQKCLAMGM (66 aa)) is a DNA-binding region (nuclear receptor). A hinge region spans residues 156–178 (KREAVQEERQKNKERDGDYECSS). Over residues 161–173 (QEERQKNKERDGD) the composition is skewed to basic and acidic residues. A disordered region spans residues 161-182 (QEERQKNKERDGDYECSSSANE). The region spanning 181–421 (NEEMPVEKIL…TFLMEMLESP (241 aa)) is the NR LBD domain.

Belongs to the nuclear hormone receptor family. NR2 subfamily. As to quaternary structure, homodimer. Heterodimer; with a rar molecule. Binds DNA preferentially as a rar/rxr heterodimer. Heterodimerizes with rarga. As to expression, shows uniform expression from the blastula to mid-gastrula stages. At 12 hours post-fertilization (hpf), expressed ubiquitously but more weakly. At 24 hpf, restricted to the ventral diencephalon, pharangeal endoderm and trunk and tail mesoderm; mesoderm expression is in medial cells of each somite along the dorsoventral axis, forming stripes. At 48 hpf, expressed in forebrain, eye, midbrain and anterior hindbrain.

The protein localises to the nucleus. Receptor for retinoic acid. Retinoic acid receptors bind as heterodimers to their target response elements in response to their ligands, all-trans or 9-cis retinoic acid, and regulate gene expression in various biological processes. The rar/rxr heterodimers bind to the retinoic acid response elements (RARE) composed of tandem 5'-AGGTCA-3' sites known as DR1-DR5. The high affinity ligand for rxrs is 9-cis retinoic acid. This Danio rerio (Zebrafish) protein is Retinoic acid receptor RXR-beta-B (rxrbb).